Reading from the N-terminus, the 139-residue chain is Galactoside-binding soluble lectin 13 (139 aa).

The Galectin domain maps to 6-138; it reads VPYKLPVSLS…DISLTSVCVC (133 aa).

In terms of assembly, homodimer; disulfide-linked. As to expression, detected in adult and fetal spleen, fetal kidney, adult urinary bladder and placenta. Placental expression originates predominantly from the syncytiotrophoblast.

It is found in the cytoplasm. It localises to the nucleus matrix. Its function is as follows. Binds beta-galactoside and lactose. Strong inducer of T-cell apoptosis. Has hemagglutinating activity towards chicken erythrocytes. This chain is Galactoside-binding soluble lectin 13 (LGALS13), found in Homo sapiens (Human).